The sequence spans 196 residues: MEEMDLNHPLKESIVFSHKMALLSKALWKSVEKDWQAWIKPFHLNLNEHHILWIAYQLNGATISDIASHGVMHVSTAFNFSKKLEARGLLSFSKKKDDKRNTYICLTDSGRQLFLETMRAFNEHTYHVYQGAVPMKELYGKFPEFSELICIVRHIYGTEFIEQFDACLTDFQNDVEEKDGHLKLASANLFPLQPAK.

The HTH marR-type domain occupies 13 to 157 (SIVFSHKMAL…LICIVRHIYG (145 aa)). The segment at residues 63–86 (ISDIASHGVMHVSTAFNFSKKLEA) is a DNA-binding region (H-T-H motif).

Homodimer.

Its function is as follows. Negative regulator of protease production and sporulation. The sequence is that of HTH-type transcriptional regulator Hpr from Shouchella clausii (strain KSM-K16) (Alkalihalobacillus clausii).